The sequence spans 180 residues: GTP cyclohydrolase 1 (180 aa).

Residues Cys71, His74, and Cys142 each coordinate Zn(2+).

Belongs to the GTP cyclohydrolase I family. As to quaternary structure, toroid-shaped homodecamer, composed of two pentamers of five dimers.

It carries out the reaction GTP + H2O = 7,8-dihydroneopterin 3'-triphosphate + formate + H(+). It participates in cofactor biosynthesis; 7,8-dihydroneopterin triphosphate biosynthesis; 7,8-dihydroneopterin triphosphate from GTP: step 1/1. The chain is GTP cyclohydrolase 1 from Helicobacter acinonychis (strain Sheeba).